A 61-amino-acid polypeptide reads, in one-letter code: Small ribosomal subunit protein uS14 (61 aa).

The Zn(2+) site is built by Cys-24, Cys-27, Cys-40, and Cys-43.

The protein belongs to the universal ribosomal protein uS14 family. Zinc-binding uS14 subfamily. Part of the 30S ribosomal subunit. Contacts proteins S3 and S10. It depends on Zn(2+) as a cofactor.

In terms of biological role, binds 16S rRNA, required for the assembly of 30S particles and may also be responsible for determining the conformation of the 16S rRNA at the A site. The protein is Small ribosomal subunit protein uS14 of Campylobacter jejuni subsp. jejuni serotype O:6 (strain 81116 / NCTC 11828).